Consider the following 217-residue polypeptide: Ribosomal RNA small subunit methyltransferase G (217 aa).

Residues G85, L90, 135–136 (IE), and R149 contribute to the S-adenosyl-L-methionine site.

The protein belongs to the methyltransferase superfamily. RNA methyltransferase RsmG family.

The protein localises to the cytoplasm. The enzyme catalyses guanosine(527) in 16S rRNA + S-adenosyl-L-methionine = N(7)-methylguanosine(527) in 16S rRNA + S-adenosyl-L-homocysteine. Its function is as follows. Specifically methylates the N7 position of guanine in position 527 of 16S rRNA. This is Ribosomal RNA small subunit methyltransferase G from Acidiphilium cryptum (strain JF-5).